The primary structure comprises 784 residues: LPS-assembly protein LptD (784 aa).

The signal sequence occupies residues 1-24; the sequence is MKKRIPTLLATMIATALYSQQGLA. Intrachain disulfides connect Cys31-Cys724 and Cys173-Cys725.

It belongs to the LptD family. Component of the lipopolysaccharide transport and assembly complex. Interacts with LptE and LptA. Contains two intramolecular disulfide bonds.

The protein resides in the cell outer membrane. Together with LptE, is involved in the assembly of lipopolysaccharide (LPS) at the surface of the outer membrane. This is LPS-assembly protein LptD from Shigella dysenteriae serotype 1 (strain Sd197).